The following is a 378-amino-acid chain: Putative F-box/kelch-repeat protein At3g43710 (378 aa).

In terms of domain architecture, F-box spans 23-69; sequence TFGIEMLPDDLVLSCLARVPRMYYPILSLVSKRFRSFLTSTELYQTR. Kelch repeat units follow at residues 130–176, 178–227, and 262–308; these read NIYV…VLDG, IYVA…GYDG, and SQCV…VPTK.

This Arabidopsis thaliana (Mouse-ear cress) protein is Putative F-box/kelch-repeat protein At3g43710.